A 451-amino-acid polypeptide reads, in one-letter code: DNA polymerase delta subunit 3 (451 aa).

3 disordered regions span residues 187 to 241, 259 to 386, and 404 to 451; these read SQAK…AASS, KQTP…KVLR, and AWES…FAKK. Residues 200-216 show a composition bias toward polar residues; it reads PSTSQVKEAPKASQTVE. Positions 225 to 241 are enriched in low complexity; the sequence is SAPAKKGSSAPKSAASS. The segment covering 306-316 has biased composition (basic and acidic residues); it reads QREEELRRMME. The span at 329 to 353 shows a compositional bias: acidic residues; the sequence is EEEEEEEEEEESEHEQLPAEEEPMA. Over residues 354-366 the composition is skewed to basic and acidic residues; sequence EEPKAPEPVKEEP. Basic residues predominate over residues 376–386; the sequence is GRRRGKRKVLR. Residues 441 to 448 carry the PIP-box motif; the sequence is QGSIMSWF.

In terms of assembly, component of the DNA polymerase delta complex which consists of PolD1, PolD2, PolD3 and PolD4, with PolD1 bearing DNA polymerase and 3' to 5' proofreading exonuclease activities. Directly interacts with PCNA.

It localises to the nucleus. In terms of biological role, accessory component of the DNA polymerase delta complex. The complex is required for the maintenance of genome integrity, acting in concert with the sliding clamp processivity factor PCNA. The polypeptide is DNA polymerase delta subunit 3 (Chaetomium thermophilum (strain DSM 1495 / CBS 144.50 / IMI 039719) (Thermochaetoides thermophila)).